Reading from the N-terminus, the 804-residue chain is Enhancer of polycomb homolog 2 (804 aa).

4 disordered regions span residues 372 to 398 (QSSD…PDGS), 484 to 507 (GFSS…SDRH), 602 to 623 (QQSQ…KSDC), and 642 to 669 (NSPT…VQPS). Residues 602 to 611 (QQSQQSLQQS) show a composition bias toward low complexity. The segment covering 654–669 (DQNAGHSNLNGVVQPS) has biased composition (polar residues).

Belongs to the enhancer of polycomb family.

The protein localises to the nucleus. In terms of biological role, may play a role in transcription or DNA repair. The protein is Enhancer of polycomb homolog 2 (epc2) of Xenopus tropicalis (Western clawed frog).